The chain runs to 215 residues: Protein ERP2 (215 aa).

The signal sequence occupies residues 1–25 (MIKSTIALPSFFIVLILALVNSVAA). At 26 to 182 (SSSYAPVAIS…TVNSTESRLT (157 aa)) the chain is on the lumenal side. The GOLD domain maps to 41–123 (KECLYYDMVT…LKKVEITLEK (83 aa)). Residues 183 to 203 (WLSILIIIIIAVISIAQVLLI) traverse the membrane as a helical segment. Residues 204 to 215 (QFLFTGRQKNYV) lie on the Cytoplasmic side of the membrane.

Belongs to the EMP24/GP25L family. Associates with EMP24, ERV25 and ERP1.

Its subcellular location is the endoplasmic reticulum membrane. In terms of biological role, involved in vesicular protein trafficking. The chain is Protein ERP2 (ERP2) from Saccharomyces cerevisiae (strain ATCC 204508 / S288c) (Baker's yeast).